The primary structure comprises 1302 residues: Regulator of telomere elongation helicase 1 (1302 aa).

The Helicase ATP-binding domain maps to 7-297; the sequence is NGVTVDFPFQ…TKTAQQGEPH (291 aa). 42–49 contacts ATP; it reads SHTGTGKT. [4Fe-4S] cluster is bound by residues Cys-146, Cys-164, Cys-173, and Cys-208. The Nuclear localization signal motif lies at 152-168; it reads KKQESNHIQIHLCRKKV. The DEAH box motif lies at 251-254; the sequence is DEAH. Positions 758–767 are enriched in low complexity; that stretch reads PAPAPRATAP. Residues 758 to 819 are disordered; the sequence is PAPAPRATAP…AAGDPESSLC (62 aa). Over residues 770-780 the composition is skewed to basic and acidic residues; sequence REGEDAVREVK. The Nuclear localization signal motif lies at 873–879; it reads PRGGRKK. 4 disordered regions span residues 981 to 1006, 1019 to 1058, 1134 to 1153, and 1160 to 1234; these read RPEH…APDP, DPRE…GKQG, CTDL…PQEE, and VLTH…QAAG. Positions 1178 to 1187 are enriched in polar residues; it reads KTQSKISSLL. A PIP-box motif is present at residues 1180 to 1187; that stretch reads QSKISSLL.

The protein belongs to the helicase family. RAD3/XPD subfamily. As to quaternary structure, interacts with TERF1. Interacts (via PIP-box) with PCNA; the interaction is direct and essential for suppressing telomere fragility. Interacts with MMS19; the interaction mediates the association of RTEL1 with the cytosolic iron-sulfur protein assembly (CIA) complex.

It is found in the nucleus. It catalyses the reaction ATP + H2O = ADP + phosphate + H(+). Its function is as follows. A probable ATP-dependent DNA helicase implicated in telomere-length regulation, DNA repair and the maintenance of genomic stability. Acts as an anti-recombinase to counteract toxic recombination and limit crossover during meiosis. Regulates meiotic recombination and crossover homeostasis by physically dissociating strand invasion events and thereby promotes noncrossover repair by meiotic synthesis dependent strand annealing (SDSA) as well as disassembly of D loop recombination intermediates. Also disassembles T loops and prevents telomere fragility by counteracting telomeric G4-DNA structures, which together ensure the dynamics and stability of the telomere. The sequence is that of Regulator of telomere elongation helicase 1 from Pongo abelii (Sumatran orangutan).